The primary structure comprises 152 residues: Globin, minor (152 aa).

The Globin domain occupies 12-152; sequence VNNSYHKDLL…ALIAVVQAAL (141 aa). Residue His-104 participates in heme b binding.

It belongs to the globin family.

The protein is Globin, minor of Anadara trapezia (Sydney cockle).